The primary structure comprises 318 residues: Thioredoxin reductase (318 aa).

36–43 is a binding site for FAD; it reads TGMQQGGQ. The cysteines at positions 136 and 139 are disulfide-linked. 286-295 contacts FAD; it reads DVMDHNYRQA.

This sequence belongs to the class-II pyridine nucleotide-disulfide oxidoreductase family. In terms of assembly, homodimer. Requires FAD as cofactor.

The protein localises to the cytoplasm. The enzyme catalyses [thioredoxin]-dithiol + NADP(+) = [thioredoxin]-disulfide + NADPH + H(+). This chain is Thioredoxin reductase (trxB), found in Vibrio cholerae serotype O1 (strain ATCC 39315 / El Tor Inaba N16961).